Here is a 117-residue protein sequence, read N- to C-terminus: Large ribosomal subunit protein uL18 (117 aa).

Belongs to the universal ribosomal protein uL18 family. As to quaternary structure, part of the 50S ribosomal subunit; part of the 5S rRNA/L5/L18/L25 subcomplex. Contacts the 5S and 23S rRNAs.

This is one of the proteins that bind and probably mediate the attachment of the 5S RNA into the large ribosomal subunit, where it forms part of the central protuberance. The protein is Large ribosomal subunit protein uL18 of Mannheimia succiniciproducens (strain KCTC 0769BP / MBEL55E).